We begin with the raw amino-acid sequence, 271 residues long: Mannosyl-3-phosphoglycerate phosphatase (271 aa).

The active-site Nucleophile is D13. Mg(2+)-binding residues include D13, D15, and D214.

It belongs to the HAD-like hydrolase superfamily. MPGP family. The cofactor is Mg(2+).

Its subcellular location is the cytoplasm. It catalyses the reaction 2-O-(alpha-D-mannosyl)-3-phosphoglycerate + H2O = (2R)-2-O-(alpha-D-mannosyl)-glycerate + phosphate. This is Mannosyl-3-phosphoglycerate phosphatase from Escherichia coli O45:K1 (strain S88 / ExPEC).